Consider the following 499-residue polypeptide: Bifunctional purine biosynthesis protein PurH (499 aa).

The MGS-like domain maps to 1-144 (MIKRALISVF…KNFKDVVVLT (144 aa)).

It belongs to the PurH family.

It carries out the reaction (6R)-10-formyltetrahydrofolate + 5-amino-1-(5-phospho-beta-D-ribosyl)imidazole-4-carboxamide = 5-formamido-1-(5-phospho-D-ribosyl)imidazole-4-carboxamide + (6S)-5,6,7,8-tetrahydrofolate. It catalyses the reaction IMP + H2O = 5-formamido-1-(5-phospho-D-ribosyl)imidazole-4-carboxamide. It participates in purine metabolism; IMP biosynthesis via de novo pathway; 5-formamido-1-(5-phospho-D-ribosyl)imidazole-4-carboxamide from 5-amino-1-(5-phospho-D-ribosyl)imidazole-4-carboxamide (10-formyl THF route): step 1/1. The protein operates within purine metabolism; IMP biosynthesis via de novo pathway; IMP from 5-formamido-1-(5-phospho-D-ribosyl)imidazole-4-carboxamide: step 1/1. This chain is Bifunctional purine biosynthesis protein PurH, found in Clostridium botulinum (strain Langeland / NCTC 10281 / Type F).